The chain runs to 120 residues: NAD(P)H-quinone oxidoreductase subunit 3, chloroplastic (120 aa).

A run of 3 helical transmembrane segments spans residues 11-31, 65-85, and 89-109; these read VVFF…SKLI, FALI…WAIV, and LGIT…IGLV.

This sequence belongs to the complex I subunit 3 family. NDH is composed of at least 16 different subunits, 5 of which are encoded in the nucleus.

The protein resides in the plastid. It localises to the chloroplast thylakoid membrane. It carries out the reaction a plastoquinone + NADH + (n+1) H(+)(in) = a plastoquinol + NAD(+) + n H(+)(out). It catalyses the reaction a plastoquinone + NADPH + (n+1) H(+)(in) = a plastoquinol + NADP(+) + n H(+)(out). In terms of biological role, NDH shuttles electrons from NAD(P)H:plastoquinone, via FMN and iron-sulfur (Fe-S) centers, to quinones in the photosynthetic chain and possibly in a chloroplast respiratory chain. The immediate electron acceptor for the enzyme in this species is believed to be plastoquinone. Couples the redox reaction to proton translocation, and thus conserves the redox energy in a proton gradient. The sequence is that of NAD(P)H-quinone oxidoreductase subunit 3, chloroplastic from Mesostigma viride (Green alga).